We begin with the raw amino-acid sequence, 339 residues long: Ketol-acid reductoisomerase (NADP(+)) (339 aa).

In terms of domain architecture, KARI N-terminal Rossmann spans 1 to 182; the sequence is MRVYYDRDAD…GGGRSGIIET (182 aa). NADP(+) contacts are provided by residues 24–27, lysine 48, serine 51, threonine 53, and 83–86; these read YGSQ and DELQ. The active site involves histidine 108. Residue glycine 134 participates in NADP(+) binding. One can recognise a KARI C-terminal knotted domain in the interval 183-328; the sequence is NFKEECETDL…AKLRGMMPWI (146 aa). Residues aspartate 191, glutamate 195, glutamate 227, and glutamate 231 each contribute to the Mg(2+) site. Substrate is bound at residue serine 252.

Belongs to the ketol-acid reductoisomerase family. It depends on Mg(2+) as a cofactor.

The catalysed reaction is (2R)-2,3-dihydroxy-3-methylbutanoate + NADP(+) = (2S)-2-acetolactate + NADPH + H(+). It carries out the reaction (2R,3R)-2,3-dihydroxy-3-methylpentanoate + NADP(+) = (S)-2-ethyl-2-hydroxy-3-oxobutanoate + NADPH + H(+). It participates in amino-acid biosynthesis; L-isoleucine biosynthesis; L-isoleucine from 2-oxobutanoate: step 2/4. The protein operates within amino-acid biosynthesis; L-valine biosynthesis; L-valine from pyruvate: step 2/4. Involved in the biosynthesis of branched-chain amino acids (BCAA). Catalyzes an alkyl-migration followed by a ketol-acid reduction of (S)-2-acetolactate (S2AL) to yield (R)-2,3-dihydroxy-isovalerate. In the isomerase reaction, S2AL is rearranged via a Mg-dependent methyl migration to produce 3-hydroxy-3-methyl-2-ketobutyrate (HMKB). In the reductase reaction, this 2-ketoacid undergoes a metal-dependent reduction by NADPH to yield (R)-2,3-dihydroxy-isovalerate. In Sinorhizobium fredii (strain NBRC 101917 / NGR234), this protein is Ketol-acid reductoisomerase (NADP(+)).